Here is a 352-residue protein sequence, read N- to C-terminus: Homocitrate synthase, omega subunit (352 aa).

The protein belongs to the alpha-IPM synthase/homocitrate synthase family. As to quaternary structure, heterodimer of an alpha and an omega chain.

It carries out the reaction acetyl-CoA + 2-oxoglutarate + H2O = (2R)-homocitrate + CoA + H(+). Functionally, this protein is a Fe-Mo-cofactor biosynthetic component. The chain is Homocitrate synthase, omega subunit (nifV-OMEGA) from Clostridium pasteurianum.